Here is a 356-residue protein sequence, read N- to C-terminus: Peptide chain release factor 1 (356 aa).

Position 233 is an N5-methylglutamine (glutamine 233).

Belongs to the prokaryotic/mitochondrial release factor family. Post-translationally, methylated by PrmC. Methylation increases the termination efficiency of RF1.

It localises to the cytoplasm. In terms of biological role, peptide chain release factor 1 directs the termination of translation in response to the peptide chain termination codons UAG and UAA. The polypeptide is Peptide chain release factor 1 (Shouchella clausii (strain KSM-K16) (Alkalihalobacillus clausii)).